The sequence spans 238 residues: Probable transcriptional regulatory protein SGO_0454 (238 aa).

It belongs to the TACO1 family. YeeN subfamily.

The protein localises to the cytoplasm. In Streptococcus gordonii (strain Challis / ATCC 35105 / BCRC 15272 / CH1 / DL1 / V288), this protein is Probable transcriptional regulatory protein SGO_0454.